Consider the following 55-residue polypeptide: ATP synthase F(0) complex subunit 8 (55 aa).

The chain crosses the membrane as a helical span at residues 4–24 (LNPHPWFSIFITSWLILIIIL).

The protein belongs to the ATPase protein 8 family. In terms of assembly, component of the ATP synthase complex composed at least of ATP5F1A/subunit alpha, ATP5F1B/subunit beta, ATP5MC1/subunit c (homooctomer), MT-ATP6/subunit a, MT-ATP8/subunit 8, ATP5ME/subunit e, ATP5MF/subunit f, ATP5MG/subunit g, ATP5MK/subunit k, ATP5MJ/subunit j, ATP5F1C/subunit gamma, ATP5F1D/subunit delta, ATP5F1E/subunit epsilon, ATP5PF/subunit F6, ATP5PB/subunit b, ATP5PD/subunit d, ATP5PO/subunit OSCP. ATP synthase complex consists of a soluble F(1) head domain (subunits alpha(3) and beta(3)) - the catalytic core - and a membrane F(0) domain - the membrane proton channel (subunits c, a, 8, e, f, g, k and j). These two domains are linked by a central stalk (subunits gamma, delta, and epsilon) rotating inside the F1 region and a stationary peripheral stalk (subunits F6, b, d, and OSCP).

The protein localises to the mitochondrion membrane. Its function is as follows. Subunit 8, of the mitochondrial membrane ATP synthase complex (F(1)F(0) ATP synthase or Complex V) that produces ATP from ADP in the presence of a proton gradient across the membrane which is generated by electron transport complexes of the respiratory chain. ATP synthase complex consist of a soluble F(1) head domain - the catalytic core - and a membrane F(1) domain - the membrane proton channel. These two domains are linked by a central stalk rotating inside the F(1) region and a stationary peripheral stalk. During catalysis, ATP synthesis in the catalytic domain of F(1) is coupled via a rotary mechanism of the central stalk subunits to proton translocation. In vivo, can only synthesize ATP although its ATP hydrolase activity can be activated artificially in vitro. Part of the complex F(0) domain. The chain is ATP synthase F(0) complex subunit 8 from Pelomedusa subrufa (African side-necked turtle).